The chain runs to 404 residues: MQNKKSHYIWLFLVIFVPALILYFNKVKLGLDLRGGTSVVLQAQGKIEADTMSKVRNIIERRVNSIGVAEPVIQLSGNDKLIVELAGIKDPQKAIELIGTTAKLEFRIKNKDGSYGPVLLEGSALKSAGVSRDQVGMPSVSFELNSQGANTFAKITRENIGKQLAIMLDNKEQSAPTINSEINGGSGIITGRFSMEEANNLANLLKSGALPVEIKIVENRTVGATLGVDSIKQTGIAGLIALGVISVFMIAIYKIPGIVADIALLINGVLVLGLLSGIGAALTLPGIAGFILTLGMAVDSNVITYERIKEELRLGESLHDAVERGYENAFPAIIDGNITTLLVAAVLFFLGTGPIKGFAVTLSLGVVATIITGVFVSKVILKLFIKTFNIKREQLFWKGALNED.

Helical transmembrane passes span 7–27 (HYIW…FNKV), 239–259 (LIAL…PGIV), 262–282 (IALL…GAAL), 283–303 (TLPG…SNVI), 330–350 (FPAI…LFFL), and 357–377 (GFAV…VFVS).

It belongs to the SecD/SecF family. SecD subfamily. As to quaternary structure, forms a complex with SecF. Part of the essential Sec protein translocation apparatus which comprises SecA, SecYEG and auxiliary proteins SecDF. Other proteins may also be involved.

The protein localises to the cell inner membrane. Functionally, part of the Sec protein translocase complex. Interacts with the SecYEG preprotein conducting channel. SecDF uses the proton motive force (PMF) to complete protein translocation after the ATP-dependent function of SecA. The chain is Protein translocase subunit SecD from Leptotrichia buccalis (strain ATCC 14201 / DSM 1135 / JCM 12969 / NCTC 10249 / C-1013-b).